The following is a 115-amino-acid chain: Salivary protein gSG6 (115 aa).

Positions 1–28 are cleaved as a signal peptide; the sequence is MAIRVELLLAMVLLPLLLLESVVPHAAA.

In terms of tissue distribution, female saliva (at protein level). Distal-lateral lobes of female salivary gland (at protein level). Not detected in male salivary gland (at protein level).

Its subcellular location is the secreted. Its function is as follows. Required for efficient probing and blood feeding. This is Salivary protein gSG6 from Anopheles gambiae (African malaria mosquito).